The chain runs to 275 residues: Shikimate dehydrogenase (NADP(+)) (275 aa).

Shikimate contacts are provided by residues 15–17 (SKS) and T62. Residue K66 is the Proton acceptor of the active site. E78 provides a ligand contact to NADP(+). Positions 87 and 102 each coordinate shikimate. NADP(+)-binding positions include 128–132 (GAGGA), 151–156 (NRTAEK), and L218. Y220 contacts shikimate. G241 lines the NADP(+) pocket.

It belongs to the shikimate dehydrogenase family. As to quaternary structure, homodimer.

It catalyses the reaction shikimate + NADP(+) = 3-dehydroshikimate + NADPH + H(+). Its pathway is metabolic intermediate biosynthesis; chorismate biosynthesis; chorismate from D-erythrose 4-phosphate and phosphoenolpyruvate: step 4/7. Its function is as follows. Involved in the biosynthesis of the chorismate, which leads to the biosynthesis of aromatic amino acids. Catalyzes the reversible NADPH linked reduction of 3-dehydroshikimate (DHSA) to yield shikimate (SA). This chain is Shikimate dehydrogenase (NADP(+)), found in Shouchella clausii (strain KSM-K16) (Alkalihalobacillus clausii).